The primary structure comprises 87 residues: MANIKSAIKRIDVTKLETARNKSKKSAIKTFIKKFEAAIEKNDKEDATKLFNLATKKIDQAASKNTISKNSAAKKISRMAKELNKLA.

It belongs to the bacterial ribosomal protein bS20 family.

Functionally, binds directly to 16S ribosomal RNA. In Finegoldia magna (strain ATCC 29328 / DSM 20472 / WAL 2508) (Peptostreptococcus magnus), this protein is Small ribosomal subunit protein bS20.